The primary structure comprises 357 residues: Probable cinnamyl alcohol dehydrogenase 2 (357 aa).

Cysteine 47 is a Zn(2+) binding site. Serine 49 provides a ligand contact to NADP(+). Zn(2+) contacts are provided by histidine 69, glutamate 70, cysteine 100, cysteine 103, cysteine 106, cysteine 114, and cysteine 163. NADP(+) is bound by residues threonine 167, 188–193 (GLGGVG), 211–216 (SSSNKK), threonine 251, glycine 275, and 298–300 (SFI).

It belongs to the zinc-containing alcohol dehydrogenase family. In terms of assembly, homodimer. It depends on Zn(2+) as a cofactor. The N-terminus is blocked.

The enzyme catalyses (E)-cinnamyl alcohol + NADP(+) = (E)-cinnamaldehyde + NADPH + H(+). It catalyses the reaction (E)-coniferol + NADP(+) = (E)-coniferaldehyde + NADPH + H(+). It carries out the reaction (E)-sinapyl alcohol + NADP(+) = (E)-sinapaldehyde + NADPH + H(+). The catalysed reaction is (E)-4-coumaroyl alcohol + NADP(+) = (E)-4-coumaraldehyde + NADPH + H(+). The enzyme catalyses (E)-caffeyl alcohol + NADP(+) = (E)-caffeyl aldehyde + NADPH + H(+). It functions in the pathway aromatic compound metabolism; phenylpropanoid biosynthesis. In terms of biological role, involved in lignin biosynthesis. Catalyzes the final step specific for the production of lignin monomers. Catalyzes the NADPH-dependent reduction of coniferaldehyde, 5-hydroxyconiferaldehyde, sinapaldehyde, 4-coumaraldehyde and caffeyl aldehyde to their respective alcohols. The sequence is that of Probable cinnamyl alcohol dehydrogenase 2 (CAD19) from Nicotiana tabacum (Common tobacco).